A 313-amino-acid chain; its full sequence is Glycine--tRNA ligase alpha subunit (313 aa).

The protein belongs to the class-II aminoacyl-tRNA synthetase family. As to quaternary structure, tetramer of two alpha and two beta subunits.

It localises to the cytoplasm. It carries out the reaction tRNA(Gly) + glycine + ATP = glycyl-tRNA(Gly) + AMP + diphosphate. The chain is Glycine--tRNA ligase alpha subunit from Leuconostoc mesenteroides subsp. mesenteroides (strain ATCC 8293 / DSM 20343 / BCRC 11652 / CCM 1803 / JCM 6124 / NCDO 523 / NBRC 100496 / NCIMB 8023 / NCTC 12954 / NRRL B-1118 / 37Y).